A 246-amino-acid polypeptide reads, in one-letter code: Probable transcriptional regulatory protein HAPS_0943 (246 aa).

It belongs to the TACO1 family.

It localises to the cytoplasm. This chain is Probable transcriptional regulatory protein HAPS_0943, found in Glaesserella parasuis serovar 5 (strain SH0165) (Haemophilus parasuis).